A 943-amino-acid chain; its full sequence is Isoleucine--tRNA ligase (943 aa).

The short motif at 59-69 (PYANGQIHLGH) is the 'HIGH' region element. L-isoleucyl-5'-AMP is bound at residue Glu-577. Residues 618–622 (KMSKS) carry the 'KMSKS' region motif. ATP is bound at residue Lys-621. Zn(2+) is bound by residues Cys-906, Cys-909, Cys-926, and Cys-929.

It belongs to the class-I aminoacyl-tRNA synthetase family. IleS type 1 subfamily. As to quaternary structure, monomer. Requires Zn(2+) as cofactor.

It is found in the cytoplasm. The enzyme catalyses tRNA(Ile) + L-isoleucine + ATP = L-isoleucyl-tRNA(Ile) + AMP + diphosphate. Its function is as follows. Catalyzes the attachment of isoleucine to tRNA(Ile). As IleRS can inadvertently accommodate and process structurally similar amino acids such as valine, to avoid such errors it has two additional distinct tRNA(Ile)-dependent editing activities. One activity is designated as 'pretransfer' editing and involves the hydrolysis of activated Val-AMP. The other activity is designated 'posttransfer' editing and involves deacylation of mischarged Val-tRNA(Ile). This is Isoleucine--tRNA ligase from Xylella fastidiosa (strain M23).